The chain runs to 245 residues: Probable transcriptional regulatory protein SUN_1622 (245 aa).

This sequence belongs to the TACO1 family.

The protein resides in the cytoplasm. The chain is Probable transcriptional regulatory protein SUN_1622 from Sulfurovum sp. (strain NBC37-1).